We begin with the raw amino-acid sequence, 257 residues long: Ribonuclease HII (257 aa).

The region spanning 72–257 (TYIAGIDEVG…FAPIKDMIQK (186 aa)) is the RNase H type-2 domain. A divalent metal cation contacts are provided by Asp-78, Glu-79, and Asp-170.

The protein belongs to the RNase HII family. The cofactor is Mn(2+). Mg(2+) is required as a cofactor.

Its subcellular location is the cytoplasm. The catalysed reaction is Endonucleolytic cleavage to 5'-phosphomonoester.. Functionally, endonuclease that specifically degrades the RNA of RNA-DNA hybrids. The polypeptide is Ribonuclease HII (Bacillus cereus (strain ATCC 10987 / NRS 248)).